We begin with the raw amino-acid sequence, 372 residues long: 4-hydroxy-3-methylbut-2-en-1-yl diphosphate synthase (flavodoxin) (372 aa).

Residues Cys270, Cys273, Cys305, and Glu312 each coordinate [4Fe-4S] cluster.

It belongs to the IspG family. [4Fe-4S] cluster serves as cofactor.

The enzyme catalyses (2E)-4-hydroxy-3-methylbut-2-enyl diphosphate + oxidized [flavodoxin] + H2O + 2 H(+) = 2-C-methyl-D-erythritol 2,4-cyclic diphosphate + reduced [flavodoxin]. The protein operates within isoprenoid biosynthesis; isopentenyl diphosphate biosynthesis via DXP pathway; isopentenyl diphosphate from 1-deoxy-D-xylulose 5-phosphate: step 5/6. In terms of biological role, converts 2C-methyl-D-erythritol 2,4-cyclodiphosphate (ME-2,4cPP) into 1-hydroxy-2-methyl-2-(E)-butenyl 4-diphosphate. The protein is 4-hydroxy-3-methylbut-2-en-1-yl diphosphate synthase (flavodoxin) of Shewanella amazonensis (strain ATCC BAA-1098 / SB2B).